A 412-amino-acid chain; its full sequence is Argininosuccinate synthase (412 aa).

ATP is bound at residue 8–16 (AYSGGLDTS). Tyrosine 87 lines the L-citrulline pocket. Glycine 117 provides a ligand contact to ATP. The L-aspartate site is built by threonine 119, asparagine 123, and aspartate 124. Asparagine 123 contributes to the L-citrulline binding site. L-citrulline-binding residues include arginine 127, serine 175, glutamate 259, and tyrosine 271.

This sequence belongs to the argininosuccinate synthase family. Type 1 subfamily. As to quaternary structure, homotetramer.

The protein resides in the cytoplasm. It catalyses the reaction L-citrulline + L-aspartate + ATP = 2-(N(omega)-L-arginino)succinate + AMP + diphosphate + H(+). The protein operates within amino-acid biosynthesis; L-arginine biosynthesis; L-arginine from L-ornithine and carbamoyl phosphate: step 2/3. The protein is Argininosuccinate synthase of Clavibacter michiganensis subsp. michiganensis (strain NCPPB 382).